Reading from the N-terminus, the 425-residue chain is MTKVVIENVHAREIFDSRGNPTVEVEVTLSNGVVGRAEVPSGASTGENEAVELRDGGSRLGGKGVMKAVNNVNTAINNELQGADPFNQPAIDKAMIELDGTPNKGKLGANAILGTSMATAVAAAKATHQPLYRYLGGTDLSMPQTFHNVINGGEHADNGIDIQEFMITPVKKTSFRDGFEKIVNTYHTLKKVLEEKGYETGLGDEGGFAPNMKDSEEALKALHEAIERAGYVPGEDIAIACDCAASYYYNKEDGKYHLEGKVLDGDQLAEYYDKLLAEFPELISMEDPYDENDTEGMVKFTQSHKDRLQIVLDDFICTNPRLLEKAIKEGAGNASLIKLNQIGTVTETLETIRISRKHGYNTMISHRSGETGDTFIADFAVATNGGQLKTGAPARSERVEKYNQLLRIEEQLGDGERLDFFPAQD.

Glutamine 163 is a (2R)-2-phosphoglycerate binding site. Glutamate 205 serves as the catalytic Proton donor. Mg(2+)-binding residues include aspartate 242, glutamate 286, and aspartate 313. Lysine 338, arginine 367, serine 368, and lysine 389 together coordinate (2R)-2-phosphoglycerate. Lysine 338 (proton acceptor) is an active-site residue.

This sequence belongs to the enolase family. Mg(2+) is required as a cofactor.

It localises to the cytoplasm. It is found in the secreted. The protein localises to the cell surface. It catalyses the reaction (2R)-2-phosphoglycerate = phosphoenolpyruvate + H2O. It functions in the pathway carbohydrate degradation; glycolysis; pyruvate from D-glyceraldehyde 3-phosphate: step 4/5. Catalyzes the reversible conversion of 2-phosphoglycerate (2-PG) into phosphoenolpyruvate (PEP). It is essential for the degradation of carbohydrates via glycolysis. This chain is Enolase, found in Lactobacillus delbrueckii subsp. bulgaricus (strain ATCC 11842 / DSM 20081 / BCRC 10696 / JCM 1002 / NBRC 13953 / NCIMB 11778 / NCTC 12712 / WDCM 00102 / Lb 14).